Consider the following 502-residue polypeptide: ATP synthase subunit alpha (502 aa).

Residues 115-135 (VDGLGPINTTNTRPIESPAPG) form a disordered region. 169–176 (GDRQTGKT) contacts ATP.

This sequence belongs to the ATPase alpha/beta chains family. As to quaternary structure, F-type ATPases have 2 components, CF(1) - the catalytic core - and CF(0) - the membrane proton channel. CF(1) has five subunits: alpha(3), beta(3), gamma(1), delta(1), epsilon(1). CF(0) has three main subunits: a(1), b(2) and c(9-12). The alpha and beta chains form an alternating ring which encloses part of the gamma chain. CF(1) is attached to CF(0) by a central stalk formed by the gamma and epsilon chains, while a peripheral stalk is formed by the delta and b chains.

Its subcellular location is the cell membrane. The catalysed reaction is ATP + H2O + 4 H(+)(in) = ADP + phosphate + 5 H(+)(out). Functionally, produces ATP from ADP in the presence of a proton gradient across the membrane. The alpha chain is a regulatory subunit. In Bacillus mycoides (strain KBAB4) (Bacillus weihenstephanensis), this protein is ATP synthase subunit alpha.